We begin with the raw amino-acid sequence, 293 residues long: MTNDERILSWNETPSKPRYTPPPGAIDAHCHVFGPMAQFPFSPKAKYLPRDAGPDMLFALRDHLGFARNVIVQASCHGTDNAATLDAIARAQGKARGIAVVDPAIDEAELAALHEGGMRGIRFNFLKRLVDDAPKDKFLEVAGRLPAGWHVVIYFEADILEELRPFMDAIPVPIVIDHMGRPDVRQGPDGADMKAFRRLLDSREDIWFKATCPDRLDPAGPPWDDFARSVAPLVADYADRVIWGTDWPHPNMQDAIPDDGLVVDMIPRIAPTPELQHKMLVTNPMRLYWSEEM.

Positions 1–20 (MTNDERILSWNETPSKPRYT) are disordered. Residues 29–31 (HCH), Y47, S75, R122, R128, Y154, and H178 each bind substrate. Catalysis depends on D246, which acts as the Proton acceptor. Residue N251 coordinates substrate.

This sequence belongs to the metallo-dependent hydrolases superfamily. PDC hydrolase family. Monomer.

The enzyme catalyses 2-oxo-2H-pyran-4,6-dicarboxylate + H2O = (1E)-4-oxobut-1-ene-1,2,4-tricarboxylate + H(+). Its pathway is secondary metabolite metabolism; lignin degradation. With respect to regulation, strongly inhibited by 1 mM Zn(2+) ions. Also inhibited by pyridine-2,4-dicarboxylic acid, 5-hydroxyisophthalic acid and 5,5'-dithiobis(2-nitrobenzoic acid) (Ellman reagent). Its function is as follows. Contributes to the degradation of lignin at the level of the protocatechuate 4,5-cleavage pathway. Catalyzes the hydrolysis of 2-pyrone-4,6-dicarboxylate (PDC) to (4E)-oxalomesaconate (OMA). The keto form of OMA can tautomerize into the enol form, 4-carboxy-2-hydroxymuconate (CHM), under certain pH conditions. Also catalyzes the reverse reaction. Is essential for the growth of Sphingobium sp. SYK-6 on vanillate but is not responsible for the growth of this strain on syringate. The sequence is that of 2-pyrone-4,6-dicarboxylate hydrolase from Sphingobium sp. (strain NBRC 103272 / SYK-6).